The primary structure comprises 367 residues: MSDSQTLVVKLGTSVLTGGSRRLNRAHIVELVRQCAQLHAAGHRIVIVTSGAIAAGREHLGYPELPATIASKQLLAAVGQSRLIQLWEQLFSIYGIHVGQMLLTRADMEDRERFLNARDTLRALLDNNIVPVINENDAVATAEIKVGDNDNLSALAAILAGADKLLLLTDQKGLYTADPRRNPQAELIKDVYGIDDALRAIAGDSVSGLGTGGMSTKLQAADVACRAGIDTIIAAGSKPGVIGDVMEGISVGTLFHAQATPLENRKRWIFGAPPAGEITVDEGATAAILERGSSLLPKGIKSVTGNFSRGEVIRICNLEGRDIAHGVSRYNSDALRRIAGHHSQEIDAILGYEYGPVAVHRDDMITR.

K10 provides a ligand contact to ATP. 3 residues coordinate substrate: S50, D137, and N149. ATP is bound by residues T169–D170 and T211–K217. Residues A275–E353 enclose the PUA domain.

This sequence belongs to the glutamate 5-kinase family.

The protein localises to the cytoplasm. It carries out the reaction L-glutamate + ATP = L-glutamyl 5-phosphate + ADP. The protein operates within amino-acid biosynthesis; L-proline biosynthesis; L-glutamate 5-semialdehyde from L-glutamate: step 1/2. Catalyzes the transfer of a phosphate group to glutamate to form L-glutamate 5-phosphate. This chain is Glutamate 5-kinase, found in Shigella flexneri.